We begin with the raw amino-acid sequence, 284 residues long: Bifunctional protein FolD (284 aa).

NADP(+) is bound by residues 166–168, Ser191, and Ile232; that span reads GAS.

Belongs to the tetrahydrofolate dehydrogenase/cyclohydrolase family. As to quaternary structure, homodimer.

The catalysed reaction is (6R)-5,10-methylene-5,6,7,8-tetrahydrofolate + NADP(+) = (6R)-5,10-methenyltetrahydrofolate + NADPH. It carries out the reaction (6R)-5,10-methenyltetrahydrofolate + H2O = (6R)-10-formyltetrahydrofolate + H(+). The protein operates within one-carbon metabolism; tetrahydrofolate interconversion. In terms of biological role, catalyzes the oxidation of 5,10-methylenetetrahydrofolate to 5,10-methenyltetrahydrofolate and then the hydrolysis of 5,10-methenyltetrahydrofolate to 10-formyltetrahydrofolate. This is Bifunctional protein FolD from Thiobacillus denitrificans (strain ATCC 25259 / T1).